Reading from the N-terminus, the 1169-residue chain is Zinc finger protein 862 (1169 aa).

Positions 11-77 (VTFDDITVYL…SVQGQRSLLE (67 aa)) constitute a KRAB 1 domain. The segment at 135–218 (KPRSIQKSWF…RDPIWAARFR (84 aa)) adopts a TTF-type 1 zinc-finger fold. Residues 333 to 404 (VVFEDVAVYF…DPNGPKWGKG (72 aa)) form the KRAB 2 domain. Residues 461–544 (RPRSIQRSWF…KEDTPHTALV (84 aa)) form a TTF-type 2 zinc finger.

It localises to the nucleus. Functionally, may be involved in transcriptional regulation. The protein is Zinc finger protein 862 (ZNF862) of Homo sapiens (Human).